We begin with the raw amino-acid sequence, 101 residues long: Enhancer of yellow 2 transcription factor (101 aa).

The protein belongs to the ENY2 family. Component of the nuclear pore complex (NPC)-associated AMEX complex (anchoring and mRNA export complex), composed of at least e(y)2 and xmas-2. Component of the SAGA transcription coactivator-HAT complexes, at least composed of Ada2b, e(y)2, Pcaf/Gcn5, Taf10 and Nipped-A/Trrap. Within the SAGA complex, e(y)2, Sgf11, and not/nonstop form an additional subcomplex of SAGA called the DUB module (deubiquitination module). Component of the THO complex, composed of at least e(y)2, HPR1, THO2, THOC5, THOC6 and THOC7. Interacts with e(y)1. Interacts with su(Hw) (via zinc fingers). Interacts with xmas-2; required for localization to the nuclear periphery. Interacts with the nuclear pore complex (NPC).

The protein localises to the nucleus. It is found in the nucleoplasm. Its subcellular location is the cytoplasm. Its function is as follows. Involved in mRNA export coupled transcription activation by association with both the AMEX and the SAGA complexes. The SAGA complex is a multiprotein complex that activates transcription by remodeling chromatin and mediating histone acetylation and deubiquitination. Within the SAGA complex, participates in a subcomplex that specifically deubiquitinates histone H2B. The SAGA complex is recruited to specific gene promoters by activators, where it is required for transcription. Required for nuclear receptor-mediated transactivation. Involved in transcription elongation by recruiting the THO complex onto nascent mRNA. The AMEX complex functions in docking export-competent ribonucleoprotein particles (mRNPs) to the nuclear entrance of the nuclear pore complex (nuclear basket). AMEX participates in mRNA export and accurate chromatin positioning in the nucleus by tethering genes to the nuclear periphery. The polypeptide is Enhancer of yellow 2 transcription factor (Drosophila yakuba (Fruit fly)).